We begin with the raw amino-acid sequence, 1342 residues long: DNA-directed RNA polymerase subunit beta (1342 aa).

Belongs to the RNA polymerase beta chain family. As to quaternary structure, the RNAP catalytic core consists of 2 alpha, 1 beta, 1 beta' and 1 omega subunit. When a sigma factor is associated with the core the holoenzyme is formed, which can initiate transcription.

It carries out the reaction RNA(n) + a ribonucleoside 5'-triphosphate = RNA(n+1) + diphosphate. In terms of biological role, DNA-dependent RNA polymerase catalyzes the transcription of DNA into RNA using the four ribonucleoside triphosphates as substrates. The polypeptide is DNA-directed RNA polymerase subunit beta (Buchnera aphidicola subsp. Schizaphis graminum (strain Sg)).